We begin with the raw amino-acid sequence, 1507 residues long: Nonribosomal peptide synthetase ataP (1507 aa).

The Carrier 1 domain maps to 1 to 72 (MQINIRNEIA…DIISRSTGMY (72 aa)). Ser33 carries the post-translational modification O-(pantetheine 4'-phosphoryl)serine. Positions 98–119 (TPSPSPSGPSTGCPTPDTLDTT) are disordered. Over residues 105–115 (GPSTGCPTPDT) the composition is skewed to low complexity. The interval 163–429 (TRMAWQQVLE…NRVFRQLVQL (267 aa)) is condensation 1. An adenylation region spans residues 514-893 (AAAENPEACA…GRNDRQIKLR (380 aa)). The Carrier 2 domain occupies 988–1065 (NEMSPTEQRV…DLSQRIDKLQ (78 aa)). Ser1025 is modified (O-(pantetheine 4'-phosphoryl)serine). Residues 1099–1471 (TSNTSFTVSF…MTALRLLIKN (373 aa)) form a condensation 2 region.

The protein belongs to the NRP synthetase family.

It functions in the pathway mycotoxin biosynthesis. Its function is as follows. Nonribosomal peptide synthetase; part of the gene cluster that mediates the biosynthesis of acetylaranotin, a member of the epipolythiodioxopiperazine (ETP) class of toxins characterized by a disulfide-bridged cyclic dipeptide. The first step of acetylaranotin biosynthesis is performed by the NRPS ataP which produces diketopiperazine cyclo-L-Phe-L-Phe via the condensation of 2 phenylalanines (L-Phe). The ataC domain of ataTC then catalyzes the formation of bishydroxylation of cyclo-L-Phe-L-Phe. The glutathione S-transferase domain ataG in ataIMG further catalyzes the conjugation of two glutathiones to the bishydroxylated intermediate. Next, the dipeptidase ataJ removes the Glu residues. The following step is performed by the carbon sulfur lyase domain ataI of ataIMG which may convert the bis-cysteinyl adduct to yield an epidithiol intermediate. The ataT domain from ataTC then catalyzes the oxidation of the free dithiols, followed by a cyclization step catalyzed by the cytochrome P450 ataF. AtaF probably acts as an epoxidase to promote a dual epoxidation formation at C8 and C9 along with C8' and C9', followed by the spontaneous nucleophilic attack of the amide nitrogens N10 and N10' to yield an intermediate with the pyrrolidine partial structure. The final steps of acetylaranotin biosynthesis involve the acetylation and ring rearrangement of an epitetrathiodiketopiperazine intermediate to produce acetylaranotin. AtaH probably catalyzes the acetylation of epitetrathiodiketopiperazine to produce a diacetate and ataY is responsible for the formation of the dihydrooxepin moiety that converts the diacetate intermediate to acetylaranotin via acetylapoaranotin. Both enzymes could function independently in the absence of the other. The acetylaranotin bis-thiomethyltransferase ataS located outside of acetylaranotin gene cluster is the main thiomethyltransferase responsible for converting acetylaranotin and its related intermediates to their methylated forms. In Aspergillus terreus (strain NIH 2624 / FGSC A1156), this protein is Nonribosomal peptide synthetase ataP.